We begin with the raw amino-acid sequence, 392 residues long: Fasciculation and elongation protein zeta-1 (392 aa).

A disordered region spans residues 1-36 (MEAPLVSLDEEFEDIRPSCTEEPEEKPQCLYGTSPH). At S58 the chain carries Phosphoserine. The tract at residues 175–196 (MQNSPDPEEEEEVLEEEDGGEI) is disordered. Acidic residues predominate over residues 180 to 194 (DPEEEEEVLEEEDGG). The stretch at 230 to 298 (SELTELLDRV…KKRRKEKGLS (69 aa)) forms a coiled coil. Phosphoserine is present on residues S298 and S316.

It belongs to the zygin family. In terms of assembly, homodimer. Interacts with the NH2-terminal variable region (V1) of PKC zeta and weakly with that of PKC epsilon. Interacts with UBE4B and SAP30L. Interacts with SCOC and ULK1; SCOC interferes with ULK1-binding to FEZ1. Directly interacts with SCOC and UVRAG. Stabilizes the interaction between SCOC and UVRAG during amino acid starvation. Phosphorylated by protein kinase C zeta; which enhances interaction with UBE4B and polyubiquitination. In terms of processing, polyubiquitinated in a UBE4B-dependent manner; which does not lead to proteasomal degradation and may be important for neurogenic activity. Polyubiquitin linkage seems to be mainly through Lys-26.

It is found in the cytoplasm. The protein localises to the cytoskeleton. It localises to the microtubule organizing center. The protein resides in the centrosome. Its subcellular location is the cell membrane. Functionally, may be involved in axonal outgrowth as component of the network of molecules that regulate cellular morphology and axon guidance machinery. May participate in the transport of mitochondria and other cargos along microtubules. The sequence is that of Fasciculation and elongation protein zeta-1 (Fez1) from Mus musculus (Mouse).